The primary structure comprises 351 residues: N-acetyl-gamma-glutamyl-phosphate reductase (351 aa).

The active site involves Cys-154.

This sequence belongs to the NAGSA dehydrogenase family. Type 1 subfamily.

The protein localises to the cytoplasm. The catalysed reaction is N-acetyl-L-glutamate 5-semialdehyde + phosphate + NADP(+) = N-acetyl-L-glutamyl 5-phosphate + NADPH + H(+). Its pathway is amino-acid biosynthesis; L-arginine biosynthesis; N(2)-acetyl-L-ornithine from L-glutamate: step 3/4. Its function is as follows. Catalyzes the NADPH-dependent reduction of N-acetyl-5-glutamyl phosphate to yield N-acetyl-L-glutamate 5-semialdehyde. The chain is N-acetyl-gamma-glutamyl-phosphate reductase from Prochlorococcus marinus (strain MIT 9312).